Reading from the N-terminus, the 675-residue chain is MEGRPPPEGRPPPRPRTGRAPRGRRRAVFAAVLHWSHITHLFENDRHFSHLSTLEREMAFRTEMGLYYSYFKTIVEAPSFLNGVWMIMNDKLTEYPLVINTLKRFNLYPEVILASWYRIYTKIMDLIGIQTKICWTVTRGEGLSPIESCEGLGDPACFYVAVIFILNGLMMALFFIYGTYLSGSRLGGLVTVLCFFFNHGECTRVMWTPPLRESFSYPFLVLQMLLVTHILRATKLYRGSLIALCISNVFFMLPWQFAQFVLLTQIASLFAVYVVGYIDICKLRKIIYIHMISLALCFVLMFGNSMLLTSYYASSLVIIWGILAMKPHFLKINVSELSLWVIQGCFWLFGTVILKYLTSKIFGIADDAHIGNLLTSKFFSYKDFDTLLYTCAAEFDFMEKETPLRYTKTLLLPVVLVVFVAIVRKIISDMWGVLAKQQTHVRKHQFDHGELVYHALQLLAYTALGILIMRLKLFLTPHMCVMASLICSRQLFGWLFCKVHPGAIVFAILAAMSIQGSANLQTQWNIVGEFSNLPQEELIEWIKYSTKPDAVFAGAMPTMASVKLSALRPIVNHPHYEDAGLRARTKIVYSMYSRKAAEEVKRELIKLKVNYYILEESWCVRRSKPGCSMPEIWDVEDPANAGKTPLCNLLVKDSKPHFTTVFQNSVYKVLEVVKE.

The disordered stretch occupies residues 1–22; that stretch reads MEGRPPPEGRPPPRPRTGRAPR. The next 11 helical transmembrane spans lie at 66–88, 156–176, 186–208, 236–254, 260–279, 286–303, 309–325, 334–354, 414–434, 449–469, and 491–511; these read LYYS…WMIM, ACFY…LFFI, LGGL…VMWT, LYRG…FMLP, FVLL…GYID, IIYI…LMFG, TSYY…ILAM, VSEL…TVIL, VVLV…WGVL, GELV…ILIM, and LFGW…ILAA.

This sequence belongs to the dpy-19 family. As to expression, widely expressed.

It is found in the endoplasmic reticulum membrane. The catalysed reaction is L-tryptophyl-[protein] + a di-trans,poly-cis-dolichyl beta-D-mannosyl phosphate = C-alpha-D-mannosyl-L-tryptophyl-[protein] + a di-trans,poly-cis-dolichyl phosphate + H(+). It functions in the pathway protein modification; protein glycosylation. In terms of biological role, C-mannosyltransferase that mediates the C-mannosylation tryptophan residues on target proteins. The reaction occurs on the luminal side of the endoplasmic reticulum and involves the transfer of a mannose unit from a dolichylphosphate mannose (Dol-P-Man) donor to an acceptor protein containing a WxxW consensus sequence. C-mannosylates the first two tryptophans in the WxxWxxWxxC motif in thrombospondin (TSP) type-1 of UNC5A. Regulates neurite extension during development. In Homo sapiens (Human), this protein is Protein C-mannosyl-transferase DPY19L1 (DPY19L1).